The sequence spans 82 residues: Small ribosomal subunit protein bS16 (82 aa).

This sequence belongs to the bacterial ribosomal protein bS16 family.

The sequence is that of Small ribosomal subunit protein bS16 from Pasteurella multocida (strain Pm70).